We begin with the raw amino-acid sequence, 271 residues long: Orotidine 5'-phosphate decarboxylase (271 aa).

The active-site Proton donor is the K95.

Belongs to the OMP decarboxylase family. Type 2 subfamily.

The enzyme catalyses orotidine 5'-phosphate + H(+) = UMP + CO2. Its pathway is pyrimidine metabolism; UMP biosynthesis via de novo pathway; UMP from orotate: step 2/2. The chain is Orotidine 5'-phosphate decarboxylase (pyrF) from Ralstonia nicotianae (strain ATCC BAA-1114 / GMI1000) (Ralstonia solanacearum).